Consider the following 174-residue polypeptide: Probable NAD(P)H dehydrogenase subunit CRR3, chloroplastic (174 aa).

The N-terminal 54 residues, Met-1–Ser-54, are a transit peptide targeting the chloroplast. Over residues Ser-14 to Asp-24 the composition is skewed to polar residues. A disordered region spans residues Ser-14 to Ile-71. Residues Pro-30–Lys-45 show a composition bias toward low complexity. Polar residues predominate over residues Val-53–Arg-64. Residues Phe-140–Ile-160 form a helical membrane-spanning segment.

The protein localises to the plastid. Its subcellular location is the chloroplast thylakoid membrane. Probable subunit of the chloroplast NAD(P)H dehydrogenase (NDH) complex of the photosynthetic electron transport chain. Required for both formation and activity of NDH. May function in assembly or stabilization of the NDH complex. This is Probable NAD(P)H dehydrogenase subunit CRR3, chloroplastic from Arabidopsis thaliana (Mouse-ear cress).